The following is a 309-amino-acid chain: Aspartate carbamoyltransferase catalytic subunit (309 aa).

Carbamoyl phosphate-binding residues include Arg57 and Thr58. Residue Lys86 coordinates L-aspartate. Positions 107, 135, and 138 each coordinate carbamoyl phosphate. Residues Arg168 and Arg228 each contribute to the L-aspartate site. 2 residues coordinate carbamoyl phosphate: Leu267 and Pro268.

Belongs to the aspartate/ornithine carbamoyltransferase superfamily. ATCase family. Heterooligomer of catalytic and regulatory chains.

It catalyses the reaction carbamoyl phosphate + L-aspartate = N-carbamoyl-L-aspartate + phosphate + H(+). It participates in pyrimidine metabolism; UMP biosynthesis via de novo pathway; (S)-dihydroorotate from bicarbonate: step 2/3. In terms of biological role, catalyzes the condensation of carbamoyl phosphate and aspartate to form carbamoyl aspartate and inorganic phosphate, the committed step in the de novo pyrimidine nucleotide biosynthesis pathway. The protein is Aspartate carbamoyltransferase catalytic subunit of Cenarchaeum symbiosum (strain A).